Here is a 177-residue protein sequence, read N- to C-terminus: Inorganic pyrophosphatase (177 aa).

Positions 29, 43, and 55 each coordinate substrate. Mg(2+) is bound by residues Asp-65, Asp-70, and Asp-102. Position 141 (Tyr-141) interacts with substrate.

Belongs to the PPase family. As to quaternary structure, homohexamer. The cofactor is Mg(2+).

The protein resides in the cytoplasm. It carries out the reaction diphosphate + H2O = 2 phosphate + H(+). Its function is as follows. Catalyzes the hydrolysis of inorganic pyrophosphate (PPi) forming two phosphate ions. The protein is Inorganic pyrophosphatase of Aquifex pyrophilus.